We begin with the raw amino-acid sequence, 290 residues long: Protein-lysine methyltransferase METTL21E (290 aa).

S-adenosyl-L-methionine-binding positions include Trp-96, 124–126, Asp-145, Trp-176, and Ala-197; that span reads GAG.

This sequence belongs to the methyltransferase superfamily. METTL21 family.

Functionally, protein-lysine methyltransferase. This chain is Protein-lysine methyltransferase METTL21E (METTL21E), found in Bos taurus (Bovine).